We begin with the raw amino-acid sequence, 75 residues long: Protein BsdD (75 aa).

Functionally, involved in the non-oxidative decarboxylation and detoxification of phenolic derivatives under both aerobic and anaerobic conditions, however the precise biochemical function of BsdD in metabolism of phenolic acid is unknown. The sequence is that of Protein BsdD from Bacillus subtilis (strain 168).